A 102-amino-acid chain; its full sequence is Neuropeptide F (102 aa).

The signal sequence occupies residues 1-29 (MSNTMRCILIVCVALTLIAAGCNVEASNS). Residues 30 to 32 (RPP) constitute a propeptide that is removed on maturation. Position 62 is a phenylalanine amide (F62). A propeptide spanning residues 66–102 (GGPLMEMLRNRELENNMAKSINSGGELIRALDEEEVF) is cleaved from the precursor.

It belongs to the NPY family.

The protein localises to the secreted. An integral part of the sensory system that mediates food signaling, providing the neural basis for the regulation of food response; coordinates larval foraging and social behavior changes during development. May have a hormonal role in females. This is Neuropeptide F from Drosophila pseudoobscura pseudoobscura (Fruit fly).